The chain runs to 95 residues: DASH complex subunit DAD3 (95 aa).

Belongs to the DASH complex DAD3 family. Component of the DASH complex consisting of ASK1, DAD1, DAD2, DAD3, DAD4, DAM1, DUO1, HSK3, SPC19 and SPC34, with a stoichiometry of one copy of each subunit per complex. Multiple DASH complexes oligomerize to form a ring that encircles spindle microtubules and organizes the rod-like NDC80 complexes of the outer kinetochore. DASH complex oligomerization strengthens microtubule attachments. On cytoplasmic microtubules, DASH complexes appear to form patches instead of rings.

The protein localises to the chromosome. The protein resides in the centromere. Its subcellular location is the kinetochore. It localises to the cytoplasm. It is found in the cytoskeleton. The protein localises to the spindle. The protein resides in the nucleus. Component of the DASH complex that connects microtubules with kinetochores and couples microtubule depolymerisation to chromosome movement; it is involved in retrieving kinetochores to the spindle poles before their re-orientation on the spindle in early mitosis and allows microtubule depolymerization to pull chromosomes apart and resist detachment during anaphase. Kinetochores, consisting of a centromere-associated inner segment and a microtubule-contacting outer segment, play a crucial role in chromosome segregation by mediating the physical connection between centromeric DNA and microtubules. Kinetochores also serve as an input point for the spindle assembly checkpoint, which delays anaphase until all chromosomes have bioriented on the mitotic spindle. The sequence is that of DASH complex subunit DAD3 from Chaetomium thermophilum (strain DSM 1495 / CBS 144.50 / IMI 039719) (Thermochaetoides thermophila).